The chain runs to 143 residues: Large ribosomal subunit protein uL11 (143 aa).

The protein belongs to the universal ribosomal protein uL11 family. In terms of assembly, part of the ribosomal stalk of the 50S ribosomal subunit. Interacts with L10 and the large rRNA to form the base of the stalk. L10 forms an elongated spine to which L12 dimers bind in a sequential fashion forming a multimeric L10(L12)X complex. One or more lysine residues are methylated.

In terms of biological role, forms part of the ribosomal stalk which helps the ribosome interact with GTP-bound translation factors. This chain is Large ribosomal subunit protein uL11, found in Pseudomonas savastanoi pv. phaseolicola (strain 1448A / Race 6) (Pseudomonas syringae pv. phaseolicola (strain 1448A / Race 6)).